A 200-amino-acid polypeptide reads, in one-letter code: RPW8-like protein 4 (200 aa).

In terms of domain architecture, RPW8 spans 1 to 157; it reads MPIAELAVIK…MKAIQVDQWT (157 aa). The chain crosses the membrane as a helical span at residues 7–29; sequence AVIKTVGGPLIAAALGVGAQVIY. Positions 70–127 form a coiled coil; sequence REVHESLTRLLEDAKSIIEKYWKLRWSRHVCRKYRYIKKLESIELELVRVAREIQVHQ.

The protein belongs to the plant RPW8 protein family.

The protein resides in the membrane. In terms of biological role, probable disease resistance (R) protein. The protein is RPW8-like protein 4 (HR4) of Arabidopsis thaliana (Mouse-ear cress).